The sequence spans 483 residues: Probable glycine dehydrogenase (decarboxylating) subunit 2 (483 aa).

Lys-267 is subject to N6-(pyridoxal phosphate)lysine.

It belongs to the GcvP family. C-terminal subunit subfamily. As to quaternary structure, the glycine cleavage system is composed of four proteins: P, T, L and H. In this organism, the P 'protein' is a heterodimer of two subunits. Pyridoxal 5'-phosphate serves as cofactor.

It carries out the reaction N(6)-[(R)-lipoyl]-L-lysyl-[glycine-cleavage complex H protein] + glycine + H(+) = N(6)-[(R)-S(8)-aminomethyldihydrolipoyl]-L-lysyl-[glycine-cleavage complex H protein] + CO2. The glycine cleavage system catalyzes the degradation of glycine. The P protein binds the alpha-amino group of glycine through its pyridoxal phosphate cofactor; CO(2) is released and the remaining methylamine moiety is then transferred to the lipoamide cofactor of the H protein. The chain is Probable glycine dehydrogenase (decarboxylating) subunit 2 from Kosmotoga olearia (strain ATCC BAA-1733 / DSM 21960 / TBF 19.5.1).